The sequence spans 147 residues: Large ribosomal subunit protein bL9 (147 aa).

It belongs to the bacterial ribosomal protein bL9 family.

Its function is as follows. Binds to the 23S rRNA. This chain is Large ribosomal subunit protein bL9, found in Helicobacter hepaticus (strain ATCC 51449 / 3B1).